The chain runs to 378 residues: D-alanine--D-alanine ligase (378 aa).

One can recognise an ATP-grasp domain in the interval 141-347 (KKLLTLNGIR…YSELIDQLIQ (207 aa)). An ATP-binding site is contributed by 171-226 (AEELGETLFVKPARQGSSVGIHKVRNEEEYNAALEDGFKYDYKILVEEAIKNPREV). Mg(2+)-binding residues include Asp-301, Glu-314, and Asn-316.

The protein belongs to the D-alanine--D-alanine ligase family. Requires Mg(2+) as cofactor. It depends on Mn(2+) as a cofactor.

Its subcellular location is the cytoplasm. The enzyme catalyses 2 D-alanine + ATP = D-alanyl-D-alanine + ADP + phosphate + H(+). Its pathway is cell wall biogenesis; peptidoglycan biosynthesis. Cell wall formation. The sequence is that of D-alanine--D-alanine ligase from Ligilactobacillus salivarius (strain UCC118) (Lactobacillus salivarius).